The chain runs to 630 residues: Conserved oligomeric Golgi complex subunit 6 (630 aa).

It belongs to the COG6 family. Component of the conserved oligomeric Golgi complex which is composed of eight different subunits and is required for normal Golgi morphology and localization.

It is found in the golgi apparatus membrane. Its function is as follows. Required for normal Golgi function. The chain is Conserved oligomeric Golgi complex subunit 6 from Drosophila melanogaster (Fruit fly).